The sequence spans 417 residues: MASVQSGKMIVGLDIGTSKVVALVGEVTADGQLEVVGIGTHPSRGLKKGVVVNIESTVQSIQRAIDEAQQMAGCRIHSAFVGIAGNHIRSLNSHGIVAIRDREVNPADIERVLDAAQAVAIPADQRVLHTLAQDYVIDNQEGVREPLGMSGVRLEAKVHVVTCAVNASQNIEKCVRRCGLEVDDIILEQLASAYSVLTEDEKELGVCLVDIGGGTTDIAIFTEGAIRHTAVIPIAGDQVTNDIAMALRTPTQYAEEIKIRYACALAKLAGAGETIKVPSVGDRPPRELSRQALAEVVEPRYDELFTLVQAELRRSGYEDLIPAGIVLTGGTSKMEGAVELAEEIFHMPVRLGVPYSVKGLTDVVRNPIYSTGVGLLMYGLQKQSDGMSMSVSGSSYSSDEPKAPVLERLKRWVQGNF.

Belongs to the FtsA/MreB family. In terms of assembly, self-interacts. Interacts with FtsZ.

It is found in the cell inner membrane. Cell division protein that is involved in the assembly of the Z ring. May serve as a membrane anchor for the Z ring. This chain is Cell division protein FtsA, found in Pseudomonas aeruginosa (strain ATCC 15692 / DSM 22644 / CIP 104116 / JCM 14847 / LMG 12228 / 1C / PRS 101 / PAO1).